We begin with the raw amino-acid sequence, 241 residues long: Thiamine import ATP-binding protein ThiQ (241 aa).

One can recognise an ABC transporter domain in the interval 2 to 239 (IQLDKLNHCY…PKDEVLIQYL (238 aa)). 41–48 (GPSGAGKS) lines the ATP pocket.

The protein belongs to the ABC transporter superfamily. Thiamine importer (TC 3.A.1.19.1) family. In terms of assembly, the complex is composed of two ATP-binding proteins (ThiQ), two transmembrane proteins (ThiP) and a solute-binding protein (ThiB).

Its subcellular location is the cell inner membrane. The enzyme catalyses thiamine(out) + ATP + H2O = thiamine(in) + ADP + phosphate + H(+). Part of the ABC transporter complex ThiBPQ involved in thiamine import. Responsible for energy coupling to the transport system. The chain is Thiamine import ATP-binding protein ThiQ from Photobacterium profundum (strain SS9).